Consider the following 318-residue polypeptide: Ribosomal RNA small subunit methyltransferase H (318 aa).

Residues 38–40 (AGH), aspartate 57, leucine 91, aspartate 105, and glutamine 112 contribute to the S-adenosyl-L-methionine site.

It belongs to the methyltransferase superfamily. RsmH family.

The protein localises to the cytoplasm. The enzyme catalyses cytidine(1402) in 16S rRNA + S-adenosyl-L-methionine = N(4)-methylcytidine(1402) in 16S rRNA + S-adenosyl-L-homocysteine + H(+). In terms of biological role, specifically methylates the N4 position of cytidine in position 1402 (C1402) of 16S rRNA. In Clavibacter michiganensis subsp. michiganensis (strain NCPPB 382), this protein is Ribosomal RNA small subunit methyltransferase H.